Here is a 165-residue protein sequence, read N- to C-terminus: ATP synthase subunit b (165 aa).

Residues 11 to 31 (LIFWTIVNFLLLVFLLGKFAW) form a helical membrane-spanning segment.

Belongs to the ATPase B chain family. In terms of assembly, F-type ATPases have 2 components, F(1) - the catalytic core - and F(0) - the membrane proton channel. F(1) has five subunits: alpha(3), beta(3), gamma(1), delta(1), epsilon(1). F(0) has three main subunits: a(1), b(2) and c(10-14). The alpha and beta chains form an alternating ring which encloses part of the gamma chain. F(1) is attached to F(0) by a central stalk formed by the gamma and epsilon chains, while a peripheral stalk is formed by the delta and b chains.

Its subcellular location is the cell membrane. In terms of biological role, f(1)F(0) ATP synthase produces ATP from ADP in the presence of a proton or sodium gradient. F-type ATPases consist of two structural domains, F(1) containing the extramembraneous catalytic core and F(0) containing the membrane proton channel, linked together by a central stalk and a peripheral stalk. During catalysis, ATP synthesis in the catalytic domain of F(1) is coupled via a rotary mechanism of the central stalk subunits to proton translocation. Component of the F(0) channel, it forms part of the peripheral stalk, linking F(1) to F(0). The polypeptide is ATP synthase subunit b (Elusimicrobium minutum (strain Pei191)).